Consider the following 123-residue polypeptide: Cell division protein SepF (123 aa).

It belongs to the SepF family. In terms of assembly, homodimer. Interacts with FtsZ.

The protein resides in the cytoplasm. Cell division protein that is part of the divisome complex and is recruited early to the Z-ring. Probably stimulates Z-ring formation, perhaps through the cross-linking of FtsZ protofilaments. Its function overlaps with FtsA. The sequence is that of Cell division protein SepF from Tropheryma whipplei (strain TW08/27) (Whipple's bacillus).